The following is a 351-amino-acid chain: Biotin synthase (351 aa).

In terms of domain architecture, Radical SAM core spans 49–265 (NRVRIHILDN…LSVFRLVNPD (217 aa)). C64, C68, and C71 together coordinate [4Fe-4S] cluster. Residues C108, C140, C200, and R269 each coordinate [2Fe-2S] cluster.

Belongs to the radical SAM superfamily. Biotin synthase family. Homodimer. [4Fe-4S] cluster serves as cofactor. It depends on [2Fe-2S] cluster as a cofactor.

The enzyme catalyses (4R,5S)-dethiobiotin + (sulfur carrier)-SH + 2 reduced [2Fe-2S]-[ferredoxin] + 2 S-adenosyl-L-methionine = (sulfur carrier)-H + biotin + 2 5'-deoxyadenosine + 2 L-methionine + 2 oxidized [2Fe-2S]-[ferredoxin]. It participates in cofactor biosynthesis; biotin biosynthesis; biotin from 7,8-diaminononanoate: step 2/2. In terms of biological role, catalyzes the conversion of dethiobiotin (DTB) to biotin by the insertion of a sulfur atom into dethiobiotin via a radical-based mechanism. This Leptospira biflexa serovar Patoc (strain Patoc 1 / Ames) protein is Biotin synthase.